Consider the following 177-residue polypeptide: MGISKASLLSLAAAGIVLAGCQSSRLGNLDNVSPPPPPAPVNAVPAGTVQKGNLDSPTQFPNAPSTDMSAQSGTQVASLPPASAPDLTPGAVAGVWNASLGGQSCKIATPQTKYGQGYRAGPLRCPGELANLASWAVNGKQLVLYDANGGTVASLYSSGQGRFDGQTTGGQAVTLSR.

The signal sequence occupies residues 1–20; sequence MGISKASLLSLAAAGIVLAG. C21 carries the N-palmitoyl cysteine lipid modification. C21 carries the S-diacylglycerol cysteine lipid modification. Residues 28 to 79 are disordered; the sequence is NLDNVSPPPPPAPVNAVPAGTVQKGNLDSPTQFPNAPSTDMSAQSGTQVASL. Positions 50–77 are enriched in polar residues; that stretch reads QKGNLDSPTQFPNAPSTDMSAQSGTQVA.

It belongs to the rhizobiaceae omp19 lipoprotein family.

Its subcellular location is the cell outer membrane. The sequence is that of Outer membrane lipoprotein omp19 (omp19) from Brucella abortus (strain 2308).